Reading from the N-terminus, the 1060-residue chain is DNA-directed RNA polymerase subunit beta (1060 aa).

Belongs to the RNA polymerase beta chain family. As to quaternary structure, in plastids the minimal PEP RNA polymerase catalytic core is composed of four subunits: alpha, beta, beta', and beta''. When a (nuclear-encoded) sigma factor is associated with the core the holoenzyme is formed, which can initiate transcription.

Its subcellular location is the plastid. It is found in the chloroplast. It catalyses the reaction RNA(n) + a ribonucleoside 5'-triphosphate = RNA(n+1) + diphosphate. Functionally, DNA-dependent RNA polymerase catalyzes the transcription of DNA into RNA using the four ribonucleoside triphosphates as substrates. The polypeptide is DNA-directed RNA polymerase subunit beta (Lactuca sativa (Garden lettuce)).